We begin with the raw amino-acid sequence, 94 residues long: Conotoxin Qc6.1 (94 aa).

The N-terminal stretch at 1–22 is a signal peptide; sequence MKLTCMMIVALLFLTAWTFVTA. The propeptide occupies 23 to 62; that stretch reads VDSKNELENRGGWGQAGGWGKLFPMARDEMKNSEVSKLDN. Cystine bridges form between cysteine 66–cysteine 84, cysteine 73–cysteine 88, and cysteine 83–cysteine 92.

The protein belongs to the conotoxin O1 superfamily. As to expression, expressed by the venom duct.

It is found in the secreted. In Conus quercinus (Oak cone), this protein is Conotoxin Qc6.1.